Consider the following 281-residue polypeptide: INSIG family protein (281 aa).

Topologically, residues 1–93 (MSRKEIYEPR…FIDYSSLITF (93 aa)) are cytoplasmic. S28 is subject to Phosphoserine. A helical membrane pass occupies residues 94–120 (FCKLCVIFGLGFVFTYLAEQIVQDAKL). Topologically, residues 121 to 134 (PLLTVNLKSWKFEP) are lumenal. The chain crosses the membrane as a helical span at residues 135 to 159 (PWPAIFGFVAVILGLSYRRMDTKYP). The Cytoplasmic segment spans residues 160-170 (LGAAPLRPSQS). Residues 171–186 (SKWQWISRYLAAFATL) traverse the membrane as a helical segment. The Lumenal portion of the chain corresponds to 187–189 (LLS). A helical membrane pass occupies residues 190-215 (MKKLLFISNSHSIVALVASSASIWYI). Topologically, residues 216–221 (FDRSRN) are cytoplasmic. Residues 222–256 (GIILSTITSVLGSILYYNLVDTSKIELNGVEFPEI) form a helical membrane-spanning segment. Residues 257–260 (QFRL) lie on the Lumenal side of the membrane. The helical transmembrane segment at 261 to 281 (WIPMILFSASTIVGNAGRLLF) threads the bilayer.

The protein belongs to the INSIG family.

The protein resides in the endoplasmic reticulum membrane. In Schizosaccharomyces pombe (strain 972 / ATCC 24843) (Fission yeast), this protein is INSIG family protein (ins1).